A 388-amino-acid chain; its full sequence is Succinate--CoA ligase [ADP-forming] subunit beta (388 aa).

Positions 9–244 constitute an ATP-grasp domain; that stretch reads KQLFAEFGLP…PSQEDEREAH (236 aa). ATP contacts are provided by residues lysine 46, 53–55, glutamate 99, serine 102, and glutamate 107; that span reads GRG. Positions 199 and 213 each coordinate Mg(2+). Residues asparagine 264 and 321–323 contribute to the substrate site; that span reads GIV.

It belongs to the succinate/malate CoA ligase beta subunit family. As to quaternary structure, heterotetramer of two alpha and two beta subunits. The cofactor is Mg(2+).

It catalyses the reaction succinate + ATP + CoA = succinyl-CoA + ADP + phosphate. It carries out the reaction GTP + succinate + CoA = succinyl-CoA + GDP + phosphate. Its pathway is carbohydrate metabolism; tricarboxylic acid cycle; succinate from succinyl-CoA (ligase route): step 1/1. Functionally, succinyl-CoA synthetase functions in the citric acid cycle (TCA), coupling the hydrolysis of succinyl-CoA to the synthesis of either ATP or GTP and thus represents the only step of substrate-level phosphorylation in the TCA. The beta subunit provides nucleotide specificity of the enzyme and binds the substrate succinate, while the binding sites for coenzyme A and phosphate are found in the alpha subunit. In Vibrio campbellii (strain ATCC BAA-1116), this protein is Succinate--CoA ligase [ADP-forming] subunit beta.